Consider the following 254-residue polypeptide: Adenosylcobinamide-GDP ribazoletransferase (254 aa).

6 consecutive transmembrane segments (helical) span residues 36–56 (YYPL…TLLL), 61–81 (PLVT…GIHL), 114–134 (ALSA…LLAL), 138–158 (LVPY…LIGV), 197–217 (WVLQ…ILLF), and 232–252 (LYGA…FPLL).

It belongs to the CobS family. The cofactor is Mg(2+).

It is found in the cell membrane. It catalyses the reaction alpha-ribazole + adenosylcob(III)inamide-GDP = adenosylcob(III)alamin + GMP + H(+). The catalysed reaction is alpha-ribazole 5'-phosphate + adenosylcob(III)inamide-GDP = adenosylcob(III)alamin 5'-phosphate + GMP + H(+). It functions in the pathway cofactor biosynthesis; adenosylcobalamin biosynthesis; adenosylcobalamin from cob(II)yrinate a,c-diamide: step 7/7. Joins adenosylcobinamide-GDP and alpha-ribazole to generate adenosylcobalamin (Ado-cobalamin). Also synthesizes adenosylcobalamin 5'-phosphate from adenosylcobinamide-GDP and alpha-ribazole 5'-phosphate. The chain is Adenosylcobinamide-GDP ribazoletransferase from Desulfitobacterium hafniense (strain Y51).